Here is a 124-residue protein sequence, read N- to C-terminus: MPTFNQLVRNGRKPPRWKTSSPALESCPQKRGVCTRVYTSTPKKPNSALRKVARVRLTNGIEVTTYIPGVGHNLQEHSIVLIRGGRVKDLPGVRYHVIRGALDTAGVANRKQSRSKYGAKRPKS.

The interval 1–25 (MPTFNQLVRNGRKPPRWKTSSPALE) is disordered. The residue at position 89 (D89) is a 3-methylthioaspartic acid. The interval 104 to 124 (TAGVANRKQSRSKYGAKRPKS) is disordered. The segment covering 111–124 (KQSRSKYGAKRPKS) has biased composition (basic residues).

This sequence belongs to the universal ribosomal protein uS12 family. Part of the 30S ribosomal subunit. Contacts proteins S8 and S17. May interact with IF1 in the 30S initiation complex.

In terms of biological role, with S4 and S5 plays an important role in translational accuracy. Functionally, interacts with and stabilizes bases of the 16S rRNA that are involved in tRNA selection in the A site and with the mRNA backbone. Located at the interface of the 30S and 50S subunits, it traverses the body of the 30S subunit contacting proteins on the other side and probably holding the rRNA structure together. The combined cluster of proteins S8, S12 and S17 appears to hold together the shoulder and platform of the 30S subunit. The protein is Small ribosomal subunit protein uS12 of Solibacter usitatus (strain Ellin6076).